The chain runs to 1157 residues: Probable ATP-dependent RNA helicase DHX37 (1157 aa).

The span at 1–10 (MGKLRRRYNI) shows a compositional bias: basic residues. Disordered regions lie at residues 1–77 (MGKL…KKEK) and 116–225 (TSKL…AAPP). Pro residues predominate over residues 21 to 30 (SKGPPEPPPV). Residues 159–184 (AEEEEEEEEESESELEEESELDEDPA) are compositionally biased toward acidic residues. 2 stretches are compositionally biased toward pro residues: residues 198 to 208 (PLPPAPAPSSQ) and 216 to 225 (VPPPPAAAPP). The Helicase ATP-binding domain maps to 262–429 (MEAVAEHPIV…PRLFAKPPPV (168 aa)). An ATP-binding site is contributed by 275-282 (GETGSGKT). The DEAH box signature appears at 372-375 (DEAH). Residues 459–716 (KVCKIHRMLP…DLILQMKALN (258 aa)) enclose the Helicase C-terminal domain. Disordered stretches follow at residues 494 to 523 (PPSR…SRAR) and 542 to 584 (VLPA…QPDA). Residues 499 to 515 (RPQEKDDDQKDSVEEMR) show a composition bias toward basic and acidic residues. Acidic residues predominate over residues 547–571 (EGDEDREAEVDEEEGALDSDLDLDL).

The protein belongs to the DEAD box helicase family. DEAH subfamily. Part of the small subunit (SSU) processome, composed of more than 70 proteins and the RNA chaperone small nucleolar RNA (snoRNA) U3. Interacts with UTP14A. In terms of tissue distribution, expressed in the fallopian tube, ovary, uterus and testis. Also expressed in the brain.

The protein resides in the nucleus. The protein localises to the nucleolus. Its subcellular location is the cytoplasm. It is found in the nucleus membrane. The catalysed reaction is ATP + H2O = ADP + phosphate + H(+). In terms of biological role, ATP-binding RNA helicase that plays a role in maturation of the small ribosomal subunit in ribosome biogenesis. Required for the release of the U3 snoRNP from pre-ribosomal particles. Part of the small subunit (SSU) processome, first precursor of the small eukaryotic ribosomal subunit. During the assembly of the SSU processome in the nucleolus, many ribosome biogenesis factors, an RNA chaperone and ribosomal proteins associate with the nascent pre-rRNA and work in concert to generate RNA folding, modifications, rearrangements and cleavage as well as targeted degradation of pre-ribosomal RNA by the RNA exosome. Plays a role in early testis development. Probably also plays a role in brain development. This chain is Probable ATP-dependent RNA helicase DHX37, found in Homo sapiens (Human).